Reading from the N-terminus, the 190-residue chain is MKRFMQIWKPAVVGFLLLTLVCGVIYPGVVTIIAGAAFQDKANGSIIEGKLADGETGKYGSTEIGQTFTQPEYLIGRAASDGAATNLNPTSEEQKQLVEKRITWWHKLDPANNRVIPMDLVTASASGVDPDISEAAAAYQVDRISRERGISTKVVKEIIAENTSKRLLGFWGEPTVNVLQVNVALDSLKM.

The chain crosses the membrane as a helical span at residues 13 to 33 (VGFLLLTLVCGVIYPGVVTII).

This sequence belongs to the KdpC family. In terms of assembly, the system is composed of three essential subunits: KdpA, KdpB and KdpC.

It localises to the cell membrane. In terms of biological role, part of the high-affinity ATP-driven potassium transport (or Kdp) system, which catalyzes the hydrolysis of ATP coupled with the electrogenic transport of potassium into the cytoplasm. This subunit acts as a catalytic chaperone that increases the ATP-binding affinity of the ATP-hydrolyzing subunit KdpB by the formation of a transient KdpB/KdpC/ATP ternary complex. This is Potassium-transporting ATPase KdpC subunit from Listeria innocua serovar 6a (strain ATCC BAA-680 / CLIP 11262).